The following is a 662-amino-acid chain: Glycogen debranching enzyme (662 aa).

D338 acts as the Nucleophile in catalysis. The active-site Proton donor is the E373.

This sequence belongs to the glycosyl hydrolase 13 family.

The catalysed reaction is Hydrolysis of (1-&gt;6)-alpha-D-glucosidic linkages to branches with degrees of polymerization of three or four glucose residues in limit dextrin.. It participates in glycan degradation; glycogen degradation. Functionally, removes maltotriose and maltotetraose chains that are attached by 1,6-alpha-linkage to the limit dextrin main chain, generating a debranched limit dextrin. The sequence is that of Glycogen debranching enzyme from Yersinia pseudotuberculosis serotype IB (strain PB1/+).